Consider the following 271-residue polypeptide: Small ribosomal subunit protein uS2 (271 aa).

Positions 223–271 (RALAGSEEGEATEEVTPASEAEKQEVLAEAMSEEGDALQESEVVEEEEK) are disordered. Acidic residues predominate over residues 253–271 (MSEEGDALQESEVVEEEEK).

The protein belongs to the universal ribosomal protein uS2 family.

This is Small ribosomal subunit protein uS2 from Wolinella succinogenes (strain ATCC 29543 / DSM 1740 / CCUG 13145 / JCM 31913 / LMG 7466 / NCTC 11488 / FDC 602W) (Vibrio succinogenes).